We begin with the raw amino-acid sequence, 1091 residues long: Sodium/potassium exporting P-type ATPase 2 (1091 aa).

Residues 1–63 lie on the Cytoplasmic side of the membrane; that stretch reads MSEGTVKENN…LGDDTKIDYK (63 aa). The helical transmembrane segment at 64–84 threads the bilayer; the sequence is AMVLHQVCNAMIMVLVISMAI. The Extracellular portion of the chain corresponds to 85-90; sequence SFAVRD. The helical transmembrane segment at 91–111 threads the bilayer; it reads WITGGVISFVIAVNVLIGLVQ. Over 112–282 the chain is Cytoplasmic; that stretch reads EYKATKTMNS…TNVGTPLHRK (171 aa). The chain crosses the membrane as a helical span at residues 283–303; it reads LSKLAVLLFWIAVLFAIIVMA. Residues 304 to 312 are Extracellular-facing; sequence SQKFDVDKR. The helical transmembrane segment at 313-333 threads the bilayer; the sequence is VAIYAICVALSMIPSSLVVVL. The Cytoplasmic segment spans residues 334–815; sequence TITMSVGAAV…RRMTDNIQKF (482 aa). D369 functions as the 4-aspartylphosphate intermediate in the catalytic mechanism. Residues D369 and T371 each coordinate Mg(2+). Residues T371 and E483 each coordinate ATP. Residues 499 to 525 are disordered; it reads ALTGEKSTNQSNENDQSSLSQHNEKPG. Polar residues predominate over residues 503–519; that stretch reads EKSTNQSNENDQSSLSQ. 7 residues coordinate ATP: K561, R606, T673, G674, D675, R732, and K738. D757 is a binding site for Mg(2+). N760 is an ATP binding site. A helical transmembrane segment spans residues 816-836; sequence VLQLLAENVAQALYLIIGLVF. Residues 837–848 are Extracellular-facing; the sequence is RDENGKSVFPLS. Residues 849-869 traverse the membrane as a helical segment; that stretch reads PVEVLWIIVVTSCFPAMGLGL. At 870–885 the chain is on the cytoplasmic side; sequence EKAAPDLMDRPPHDSE. The chain crosses the membrane as a helical span at residues 886–906; it reads VGIFTWEVIIDTFAYGIIMTG. Topologically, residues 907-943 are extracellular; sequence SCMASFTGSLYGINSGRLGHDCDGTYNSSCRDVYRSR. The chain crosses the membrane as a helical span at residues 944 to 964; sequence SAAFATMTWCALILAWEVVDM. The Cytoplasmic segment spans residues 965–991; sequence RRSFFRMHPDTDSPVKEFFRSIWGNQF. A helical membrane pass occupies residues 992 to 1012; sequence LFWSIIFGFVSAFPVVYIPVI. Topologically, residues 1013–1021 are extracellular; it reads NDKVFLHKP. A helical transmembrane segment spans residues 1022-1042; the sequence is IGAEWGLAIAFTIAFWIGAEL. Residues 1043–1091 lie on the Cytoplasmic side of the membrane; that stretch reads YKCGKRRYFKTQRAHNPENDLESNNKRDPFEAYSTSTTIHTEVNIGIKQ.

It belongs to the cation transport ATPase (P-type) (TC 3.A.3) family. Type IID subfamily. Mg(2+) serves as cofactor. In terms of processing, the active site is phosphorylated in presence of sodium or potassium and in conditions of higher pH. Not phosphorylated in presence of calcium ions.

It localises to the cell membrane. The enzyme catalyses Na(+)(in) + ATP + H2O = Na(+)(out) + ADP + phosphate + H(+). The catalysed reaction is K(+)(in) + ATP + H2O = K(+)(out) + ADP + phosphate + H(+). Functionally, catalyzes the hydrolysis of ATP coupled with the export of sodium and potassium from the cell. May export potassium less efficiently. May transport other cations such as lithium. Sodium/potassium efflux ATPases are involved in salt tolerance and maintaining the membrane potential across the plasma membrane in high salinity (Na+) or alkaline (K+) environments. The polypeptide is Sodium/potassium exporting P-type ATPase 2 (Saccharomyces cerevisiae (strain ATCC 204508 / S288c) (Baker's yeast)).